We begin with the raw amino-acid sequence, 991 residues long: uncharacterized protein (991 aa).

An N-terminal signal peptide occupies residues 1 to 17 (MLWPAALVAMFALAARA). Disordered regions lie at residues 332-352 (DPLP…GETT), 392-425 (TTED…TTEG), 469-511 (EDST…EDTT), 542-569 (DTEA…TTPV), 587-641 (PAPT…NSLS), and 658-734 (ASSG…PPRI). Low complexity predominate over residues 400-413 (TSTPTVTTVIDPTS). The segment covering 414–425 (GAVTTESRTTEG) has biased composition (polar residues). Over residues 472–493 (TTTARAAEYPTPTTTTVEPRPA) the composition is skewed to low complexity. A compositionally biased stretch (polar residues) spans 542 to 554 (DTEAAQSATSISD). Composition is skewed to low complexity over residues 556–569 (VTPE…TTPV) and 598–615 (ASTT…SHTP). Composition is skewed to polar residues over residues 617-628 (PQESTSTPSRAP) and 658-667 (ASSGPGASTG). The span at 668–682 (ATTAPISPPWSASPA) shows a compositional bias: low complexity. Residues 686–710 (VTTSAARTLEPSSTRKAVAAESTTA) are compositionally biased toward polar residues.

This is an uncharacterized protein from Psittacid herpesvirus 1 (isolate Amazon parrot/-/97-0001/1997) (PsHV-1).